Consider the following 672-residue polypeptide: Putative per-hexamer repeat protein 5 (672 aa).

Composition is skewed to gly residues over residues 141-161 (TGTG…GTGT), 171-191 (TDRG…GTGT), 215-233 (TGTG…GTDT), 243-263 (TGTG…GTGT), 273-295 (TDRG…GTGT), 303-355 (TGTG…GSGS), and 365-389 (TGTG…GSGS). 2 disordered regions span residues 141–193 (TGTG…GTGT) and 213–672 (TGTG…TGTA). Residues 390–424 (GTAKVTGTATTTATVTETGTAKVTGTDTGTAKVTG) are compositionally biased toward low complexity. The span at 425-469 (TGTGTGTGTGTGTGTGTGTGTGTGTGTGTGTGTGTGTGTGTGSGS) shows a compositional bias: gly residues. Positions 470–486 (GTAKVTGTDTGTAKVTG) are enriched in low complexity. The span at 487–537 (TGTGTGTGTGTGTGTGTGTGTGTGSGSGSGSGSGSGSGTGTGTGLGSGSGS) shows a compositional bias: gly residues. The segment covering 538 to 552 (GTAKVTGTGTAKVTG) has biased composition (low complexity). Positions 553-617 (TGTGTGTGTG…GTGTGTGTGT (65 aa)) are enriched in gly residues. Over residues 618 to 636 (GTSTVTVRGTGTGTATATG) the composition is skewed to low complexity. 2 stretches are compositionally biased toward gly residues: residues 637–653 (TGTG…GTGT) and 663–672 (RGTGTGTGTA).

This is Putative per-hexamer repeat protein 5 (Phxr5) from Mus musculus (Mouse).